A 453-amino-acid chain; its full sequence is Alpha-2B adrenergic receptor (453 aa).

Topologically, residues 1–17 are extracellular; sequence MSGPTMDHQEPYSVQAT. A helical membrane pass occupies residues 18–42; that stretch reads AAIASAITFLILFTIFGNALVILAV. Over 43–54 the chain is Cytoplasmic; the sequence is LTSRSLRAPQNL. The chain crosses the membrane as a helical span at residues 55–80; it reads FLVSLAAADILVATLIIPFSLANELL. Over 81-90 the chain is Extracellular; the sequence is GYWYFWRAWC. Cys90 and Cys169 are disulfide-bonded. Residues 91-113 traverse the membrane as a helical segment; it reads EVYLALDVLFCTSSIVHLCAISL. At 114–135 the chain is on the cytoplasmic side; the sequence is DRYWAVSRALEYNSKRTPRRIK. A helical transmembrane segment spans residues 136–158; sequence CIILTVWLIAAVISLPPLIYKGD. Residues 159-174 lie on the Extracellular side of the membrane; the sequence is QRPEPRGLPQCELNQE. Residues 175–198 form a helical membrane-spanning segment; the sequence is AWYILASSIGSFFAPCLIMILVYL. Topologically, residues 199–375 are cytoplasmic; the sequence is RIYVIAKRSH…LSREKRFTFV (177 aa). The tract at residues 213–331 is disordered; that stretch reads GAKRGSGEGE…PASVCNPPLQ (119 aa). Residues 287–297 show a composition bias toward polar residues; that stretch reads GQGQKKGTSGA. Over residues 300–314 the composition is skewed to acidic residues; it reads EEGDEEDEEEVEECE. A helical transmembrane segment spans residues 376 to 399; that stretch reads LAVVIGVFVVCWFPFFFSYSLGAI. Topologically, residues 400-408 are extracellular; that stretch reads CPQHCKVPH. The chain crosses the membrane as a helical span at residues 409-432; that stretch reads GLFQFFFWIGYCNSSLNPVIYTVF. Residues 433-453 lie on the Cytoplasmic side of the membrane; it reads NQDFRRAFRRILCRPWTQTGW. A lipid anchor (S-palmitoyl cysteine) is attached at Cys445.

It belongs to the G-protein coupled receptor 1 family. Adrenergic receptor subfamily. ADRA2B sub-subfamily. As to quaternary structure, interacts with RAB26. Interacts with PPP1R9B. Interacts with GGA1, GGA2 and GGA3.

The protein resides in the cell membrane. Functionally, alpha-2 adrenergic receptors mediate the catecholamine-induced inhibition of adenylate cyclase through the action of G proteins. This Rattus norvegicus (Rat) protein is Alpha-2B adrenergic receptor (Adra2b).